Here is a 1542-residue protein sequence, read N- to C-terminus: MSAAGVPAELNNLGAPITATTQNPSGLANSQVTSDPVPSATQHDEHRSSAGNTLADEEGDKSVDAEKVEAMYTGDSKQKRLPADSSEDIVAELEPHHVSVHRGKEEFAALERKYSTLSQQSQHELHRPTTRHSIRSSFSRKDRVVSRLTQDEAEKAKEGEGEFNLVQVLRSSRENQDEAGIKRKAVGVIWEDHEVIGAGGMRINIRNFSSAIIEQFMMPALKVLGIFGVNPFAPKPKNILYPSSGLLKPGEMCLVLGRPEAGCTTFLKTITNQRAGYMEIKGNVEYAGVGWKEMRKRYGGEVVYNQEDDDHLPTLTVAQTIRFALATKTPKKKIPGVSAKQFQDDMLDLLLSMLNIKHTANTIVGNAFVRGVSGGERKRVSIAEMFCSGATVCSWDNSTRGLDASTALDYAKSLRLLTDIMGQTTFVSLYQAGEGIYDQFDKVLVLNEGHVAYFGPAKEARQYMIGLGYRDLPRQTTADYLSGCTDVNERRFADGRDETNVPATPEEMGKAYRESEICARMNREREEYKQLMAEDATIREDFKQAVLEQKHKGVSKKSSYTVSFFQQIFIIFKRQLRLKFQDHFGISTGYATSIIIALIVGSVYFRLPETASGAFTRGGLLFLGLLFNALTSFSELPSQMLGRSVLYRQNEYRFYRPAAFAVASVLADVPYNASVIFLFSIVLYFMGGLYSSGGAFFIFYLFVFLTFMVMSAFFRTLGVATSDYNVAARLASVLISFMVTYTGYMIPVQQMKRWLFWIFYLNPLSYGYEAIFANEFSRIDLTCDSSYTIPRNVPQAGITGYPDTLGPNQMCSIFGSTPGNPNVSGSDYMAVGYSYYKTHIWRNFGILVGFFAFFMFLQMMFIEYLEQGAKHFSINVYKKEDKDLKAKNERLAERREAFRAGQLEQDLSELKMRPEPFTWEGLNYTVPIPGGHRQLLNDIYGYVKPGSLTALMGASGAGKTTLLDVLASRKNIGVIEGDILMNGRPIGTDFQRGCAYAEQQDTHEWTTTVREALQYSAYLRQPQHVPKQEKDDYVEDIIELLELQELADAMIGFPGYGLSVEARKRVTIGVELAAKPELLLFLDEPTSGLDGQSAYNIVRFLKKLCAAGQKILCTIHQPNALLFQSFDRLLLLQRGGECVYFGDIGPDSKVLIDYLERNGAKVPHDANPAEFMLEAIGAGSRKRIGSDWGEKWRNSPEFAEVKREIQELKAEALAKPVEEKSSRTEYATSFLFQLKTVLHRTNVALWRNADYQWTRLFAHLAIGLIVTLTFLQLDNSVQSLQYRVFAIFFATVLPALILAQIEPQYIMSRMTFNREASSKMYSSTVFALTQLLAEMPYSLGCAVSFFLLLYYGVGFPHASSRAGYFFLMILVTEIYAVTLGQAVAALSPTILIAALFNPFLLVLFSIFCGVTAPPPTLPYFWRKWMWPLDPFTRLISGLVSTVLQDQEVVCKDGEYQVFPAPSGQTCQQWAGAFAEAVGGYINNPDSTDDCQFCQYRTGQAFFIPLEISFSTRWRDFGIFICYVVFNILVLLIAARFLKWQRR.

Disordered regions lie at residues 1 to 84 and 118 to 141; these read MSAA…LPAD and SQQSQHELHRPTTRHSIRSSFSRK. A compositionally biased stretch (polar residues) spans 18–41; sequence TATTQNPSGLANSQVTSDPVPSAT. The span at 60-69 shows a compositional bias: basic and acidic residues; sequence DKSVDAEKVE. 2 N-linked (GlcNAc...) asparagine glycosylation sites follow: Asn-207 and Asn-397. The ABC transporter 1 domain occupies 221–473; that stretch reads LKVLGIFGVN…MIGLGYRDLP (253 aa). A run of 5 helical transmembrane segments spans residues 584–604, 618–638, 669–689, 694–714, and 726–746; these read FGISTGYATSIIIALIVGSVY, GGLLFLGLLFNALTSFSELPS, VPYNASVIFLFSIVLYFMGGL, GAFFIFYLFVFLTFMVMSAFF, and VAARLASVLISFMVTYTGYMI. N-linked (GlcNAc...) asparagine glycosylation occurs at Asn-822. The chain crosses the membrane as a helical span at residues 844–864; that stretch reads FGILVGFFAFFMFLQMMFIEY. Positions 917 to 1159 constitute an ABC transporter 2 domain; that stretch reads FTWEGLNYTV…VLIDYLERNG (243 aa). N-linked (GlcNAc...) asparagine glycosylation is present at Asn-923. 953–960 contributes to the ATP binding site; sequence GASGAGKT. 6 helical membrane-spanning segments follow: residues 1253 to 1273, 1284 to 1304, 1335 to 1355, 1365 to 1385, 1390 to 1410, and 1516 to 1536; these read WTRLFAHLAIGLIVTLTFLQL, VFAIFFATVLPALILAQIEPQ, MPYSLGCAVSFFLLLYYGVGF, FFLMILVTEIYAVTLGQAVAA, ILIAALFNPFLLVLFSIFCGV, and FGIFICYVVFNILVLLIAARF.

The protein belongs to the ABC transporter superfamily. ABCG family. PDR (TC 3.A.1.205) subfamily.

It localises to the cell membrane. It catalyses the reaction itraconazole(in) + ATP + H2O = itraconazole(out) + ADP + phosphate + H(+). The catalysed reaction is voriconazole(in) + ATP + H2O = voriconazole(out) + ADP + phosphate + H(+). It carries out the reaction fluconazole(in) + ATP + H2O = fluconazole(out) + ADP + phosphate + H(+). Functionally, major pleiotropic ABC efflux transporter that confers resistance to structurally and functionally unrelated compounds including azoles such as fluconazole (FLC), itraconazole (ITC), posaconazole (POS), and voriconazole (VRC). Is also able to efflux the eukaryote protein synthesis inhibitor cycloheximide (CHX). The chain is ABC multidrug transporter AFR1 from Cryptococcus deuterogattii (strain R265) (Cryptococcus gattii VGII (strain R265)).